Consider the following 436-residue polypeptide: ATP-dependent protease ATPase subunit HslU (436 aa).

ATP is bound by residues I18, 60–65 (GVGKTE), D250, E314, and R386.

It belongs to the ClpX chaperone family. HslU subfamily. In terms of assembly, a double ring-shaped homohexamer of HslV is capped on each side by a ring-shaped HslU homohexamer. The assembly of the HslU/HslV complex is dependent on binding of ATP.

It is found in the cytoplasm. ATPase subunit of a proteasome-like degradation complex; this subunit has chaperone activity. The binding of ATP and its subsequent hydrolysis by HslU are essential for unfolding of protein substrates subsequently hydrolyzed by HslV. HslU recognizes the N-terminal part of its protein substrates and unfolds these before they are guided to HslV for hydrolysis. The polypeptide is ATP-dependent protease ATPase subunit HslU (Mesorhizobium japonicum (strain LMG 29417 / CECT 9101 / MAFF 303099) (Mesorhizobium loti (strain MAFF 303099))).